The sequence spans 126 residues: Profilin-3 (126 aa).

The protein belongs to the profilin family. Occurs in many kinds of cells as a complex with monomeric actin in a 1:1 ratio.

It is found in the cytoplasm. Its subcellular location is the cytoskeleton. Its function is as follows. Binds to actin and affects the structure of the cytoskeleton. At high concentrations, profilin prevents the polymerization of actin, whereas it enhances it at low concentrations. By binding to PIP2, it inhibits the formation of IP3 and DG. This Dictyostelium discoideum (Social amoeba) protein is Profilin-3 (proC).